A 250-amino-acid polypeptide reads, in one-letter code: Ubiquinone biosynthesis O-methyltransferase (250 aa).

S-adenosyl-L-methionine contacts are provided by Arg-41, Gly-72, Asp-93, and Met-136.

This sequence belongs to the methyltransferase superfamily. UbiG/COQ3 family.

The enzyme catalyses a 3-demethylubiquinol + S-adenosyl-L-methionine = a ubiquinol + S-adenosyl-L-homocysteine + H(+). The catalysed reaction is a 3-(all-trans-polyprenyl)benzene-1,2-diol + S-adenosyl-L-methionine = a 2-methoxy-6-(all-trans-polyprenyl)phenol + S-adenosyl-L-homocysteine + H(+). The protein operates within cofactor biosynthesis; ubiquinone biosynthesis. In terms of biological role, O-methyltransferase that catalyzes the 2 O-methylation steps in the ubiquinone biosynthetic pathway. The protein is Ubiquinone biosynthesis O-methyltransferase of Agrobacterium fabrum (strain C58 / ATCC 33970) (Agrobacterium tumefaciens (strain C58)).